The primary structure comprises 122 residues: Small ribosomal subunit protein uS13 (122 aa).

The span at 95 to 116 (GLPVRGQKTKTNARTRKGRRKT) shows a compositional bias: basic residues. A disordered region spans residues 95–122 (GLPVRGQKTKTNARTRKGRRKTVGAATK).

This sequence belongs to the universal ribosomal protein uS13 family. As to quaternary structure, part of the 30S ribosomal subunit. Forms a loose heterodimer with protein S19. Forms two bridges to the 50S subunit in the 70S ribosome.

Its function is as follows. Located at the top of the head of the 30S subunit, it contacts several helices of the 16S rRNA. In the 70S ribosome it contacts the 23S rRNA (bridge B1a) and protein L5 of the 50S subunit (bridge B1b), connecting the 2 subunits; these bridges are implicated in subunit movement. Contacts the tRNAs in the A and P-sites. The sequence is that of Small ribosomal subunit protein uS13 from Campylobacter concisus (strain 13826).